Reading from the N-terminus, the 392-residue chain is 6-aminohexanoate-dimer hydrolase (392 aa).

The disordered stretch occupies residues methionine 1–threonine 22. Residue serine 112 is part of the active site.

The enzyme catalyses [N-(6-aminohexanoyl)](n) + H2O = [N-(6-aminohexanoyl)](n-1) + 6-aminohexanoate. It catalyses the reaction N-(6-aminohexanoyl)-6-aminohexanoate + H2O = 2 6-aminohexanoate. The protein operates within xenobiotic degradation; nylon-6 oligomer degradation. Functionally, involved in nylon oligomer degradation. The protein is 6-aminohexanoate-dimer hydrolase of Paenarthrobacter ureafaciens.